The following is a 205-amino-acid chain: DNA-directed RNA polymerase RPB5 homolog (205 aa).

This sequence belongs to the archaeal RpoH/eukaryotic RPB5 RNA polymerase subunit family. Part of the viral DNA-directed RNA polymerase that consists of 8 polII-like subunits (RPB1, RPB2, RPB3, RPB5, RPB6, RPB7, RPB9, RPB10), a capping enzyme and a termination factor.

The protein localises to the host cytoplasm. It is found in the virion. Component of the DNA-directed RNA polymerase (RNAP) that catalyzes the transcription in the cytoplasm of viral DNA into RNA using the four ribonucleoside triphosphates as substrates. This Ornithodoros (relapsing fever ticks) protein is DNA-directed RNA polymerase RPB5 homolog.